A 265-amino-acid polypeptide reads, in one-letter code: 5'-nucleotidase SurE (265 aa).

4 residues coordinate a divalent metal cation: aspartate 9, aspartate 10, serine 40, and asparagine 96.

This sequence belongs to the SurE nucleotidase family. A divalent metal cation serves as cofactor.

It localises to the cytoplasm. It catalyses the reaction a ribonucleoside 5'-phosphate + H2O = a ribonucleoside + phosphate. Its function is as follows. Nucleotidase that shows phosphatase activity on nucleoside 5'-monophosphates. This is 5'-nucleotidase SurE from Methanothrix thermoacetophila (strain DSM 6194 / JCM 14653 / NBRC 101360 / PT) (Methanosaeta thermophila).